Consider the following 151-residue polypeptide: Cytochrome c-type biogenesis protein CcmE (151 aa).

Over 1 to 8 (MNPLRRKR) the chain is Cytoplasmic. A helical; Signal-anchor for type II membrane protein membrane pass occupies residues 9 to 29 (LLIILAILVGVGVAVGLALSA). Residues 30–151 (LQQNINLFYT…QSAPTPAKEG (122 aa)) lie on the Periplasmic side of the membrane. Heme-binding residues include H124 and Y128.

It belongs to the CcmE/CycJ family.

Its subcellular location is the cell inner membrane. Functionally, heme chaperone required for the biogenesis of c-type cytochromes. Transiently binds heme delivered by CcmC and transfers the heme to apo-cytochromes in a process facilitated by CcmF and CcmH. The polypeptide is Cytochrome c-type biogenesis protein CcmE (Pseudomonas fluorescens biotype C).